A 304-amino-acid polypeptide reads, in one-letter code: Ribosomal protein L11 methyltransferase (304 aa).

Positions 152, 173, 195, and 234 each coordinate S-adenosyl-L-methionine.

The protein belongs to the methyltransferase superfamily. PrmA family.

It is found in the cytoplasm. The enzyme catalyses L-lysyl-[protein] + 3 S-adenosyl-L-methionine = N(6),N(6),N(6)-trimethyl-L-lysyl-[protein] + 3 S-adenosyl-L-homocysteine + 3 H(+). In terms of biological role, methylates ribosomal protein L11. The sequence is that of Ribosomal protein L11 methyltransferase from Cupriavidus metallidurans (strain ATCC 43123 / DSM 2839 / NBRC 102507 / CH34) (Ralstonia metallidurans).